The primary structure comprises 851 residues: Venom phosphodiesterase (851 aa).

An N-terminal signal peptide occupies residues M1–G23. 2 consecutive SMB domains span residues P30–T73 and Q74–S118. Disulfide bonds link C34/C38, C34/C51, C38/C69, C49/C51, C49/C62, C55/C61, C62/C69, C78/C83, C78/C95, C83/C113, C93/C95, C93/C106, C99/C105, C106/C113, C124/C170, and C132/C344. N39 carries an N-linked (GlcNAc...) asparagine glycan. The Cell attachment site motif lies at R58 to A60. Residues D147 and T185 each contribute to the a divalent metal cation site. T185 functions as the AMP-threonine intermediate in the catalytic mechanism. 3 N-linked (GlcNAc...) asparagine glycosylation sites follow: N216, N259, and N270. K271 lines the AMP pocket. A divalent metal cation is bound by residues D305, H309, D352, and H353. H309 is an AMP binding site. 6 disulfides stabilise this stretch: C360–C457, C408–C793, C541–C599, C554–C654, C556–C639, and C762–C772. N405 carries an N-linked (GlcNAc...) asparagine glycan. An a divalent metal cation-binding site is contributed by H462. Residues N512, N594, and N745 are each glycosylated (N-linked (GlcNAc...) asparagine).

This sequence belongs to the nucleotide pyrophosphatase/phosphodiesterase family. Monomer cleaved in two subunits; disulfide-linked. Is synthesized as a single-chain protein and is subsequently cleaved to form a two-subunit protein held together with disulfide bonds. Requires a divalent metal cation as cofactor. As to expression, expressed by venom gland.

The protein resides in the secreted. The enzyme catalyses ADP + H2O = AMP + phosphate + H(+). In terms of biological role, hydrolyzes ADP with high activity. Shows weak or no activity on 5'-AMP, 5'-GMP, 3'-AMP, ATP, cAMP, and cGMP. Is devoid of monophosphatase and proteinase activities. Dose-dependently inhibits platelet aggregation induced by ADP (IC(50)=0.99 uM) and collagen (IC(50)=1.4 uM). The sequence is that of Venom phosphodiesterase from Macrovipera lebetinus (Levantine viper).